The primary structure comprises 494 residues: Ketol-acid reductoisomerase (NADP(+)) (494 aa).

A KARI N-terminal Rossmann domain is found at leucine 14–serine 208. NADP(+)-binding positions include cysteine 45–glutamine 48, arginine 68, arginine 76, serine 78, and aspartate 108–glutamine 110. Histidine 132 is a catalytic residue. An NADP(+)-binding site is contributed by glycine 158. 2 consecutive KARI C-terminal knotted domains span residues serine 209–glutamate 344 and tyrosine 345–methionine 487. Mg(2+) is bound by residues aspartate 217, glutamate 221, glutamate 389, and glutamate 393. Serine 414 provides a ligand contact to substrate.

Belongs to the ketol-acid reductoisomerase family. Mg(2+) serves as cofactor.

The enzyme catalyses (2R)-2,3-dihydroxy-3-methylbutanoate + NADP(+) = (2S)-2-acetolactate + NADPH + H(+). It carries out the reaction (2R,3R)-2,3-dihydroxy-3-methylpentanoate + NADP(+) = (S)-2-ethyl-2-hydroxy-3-oxobutanoate + NADPH + H(+). It participates in amino-acid biosynthesis; L-isoleucine biosynthesis; L-isoleucine from 2-oxobutanoate: step 2/4. It functions in the pathway amino-acid biosynthesis; L-valine biosynthesis; L-valine from pyruvate: step 2/4. Involved in the biosynthesis of branched-chain amino acids (BCAA). Catalyzes an alkyl-migration followed by a ketol-acid reduction of (S)-2-acetolactate (S2AL) to yield (R)-2,3-dihydroxy-isovalerate. In the isomerase reaction, S2AL is rearranged via a Mg-dependent methyl migration to produce 3-hydroxy-3-methyl-2-ketobutyrate (HMKB). In the reductase reaction, this 2-ketoacid undergoes a metal-dependent reduction by NADPH to yield (R)-2,3-dihydroxy-isovalerate. The protein is Ketol-acid reductoisomerase (NADP(+)) of Pseudoalteromonas atlantica (strain T6c / ATCC BAA-1087).